The chain runs to 160 residues: Phosphopantetheine adenylyltransferase (160 aa).

Position 9 (Thr-9) interacts with substrate. ATP is bound by residues 9–10 (TF) and His-17. Residues Lys-41, Leu-73, and Arg-87 each coordinate substrate. Residues 88–90 (GLR), Glu-98, and 123–129 (FSYTSSS) each bind ATP.

The protein belongs to the bacterial CoaD family. Homohexamer. Mg(2+) serves as cofactor.

The protein localises to the cytoplasm. The catalysed reaction is (R)-4'-phosphopantetheine + ATP + H(+) = 3'-dephospho-CoA + diphosphate. It participates in cofactor biosynthesis; coenzyme A biosynthesis; CoA from (R)-pantothenate: step 4/5. Reversibly transfers an adenylyl group from ATP to 4'-phosphopantetheine, yielding dephospho-CoA (dPCoA) and pyrophosphate. The sequence is that of Phosphopantetheine adenylyltransferase from Opitutus terrae (strain DSM 11246 / JCM 15787 / PB90-1).